Here is an 815-residue protein sequence, read N- to C-terminus: RNA-binding protein 5 (815 aa).

Residues 1–93 form a disordered region; the sequence is MGSDKRVSRT…EHDYRHDISD (93 aa). 5 positions are modified to phosphoserine: Ser18, Ser59, Ser69, Ser72, and Ser78. The RRM 1 domain maps to 98-178; it reads KTIMLRGLPI…KHIAMHYSNP (81 aa). The RanBP2-type zinc finger occupies 181–210; the sequence is KFEDWLCNKCCLNNFRKRLKCFRCGADKFD. Residues 231–315 enclose the RRM 2 domain; it reads DTIILRNIAP…KTIGVDFAKS (85 aa). The interval 321-809 is required for interaction with U2AF2; it reads VLPDGNRVSA…KDAVRKAMFA (489 aa). Disordered regions lie at residues 385–468 and 508–539; these read QAGG…DESS and AAEA…TAQQ. The segment covering 393 to 410 has biased composition (low complexity); sequence TSATSGTTVTTTSAAVVS. Over residues 411–422 the composition is skewed to polar residues; that stretch reads QSPQLYNQTSNP. Residues 426–446 show a composition bias toward low complexity; the sequence is PTEEAQPSTSTSTQAPAASPT. Position 444 is a phosphoserine (Ser444). The sufficient for interaction with ACIN1, PRPF8, SFRS3, SNRPB, SNRPN, SNRNP70 and SNRNP200 stretch occupies residues 452 to 535; sequence TKYAVPDTST…KEKKEKPKSK (84 aa). A phosphoserine mark is found at Ser621 and Ser624. The C2H2-type zinc-finger motif lies at 647–672; the sequence is MACLLCRRQFPNRDALVRHQQLSDLH. The 47-residue stretch at 743-789 folds into the G-patch domain; that stretch reads HSNIGNKMLQAMGWREGSGLGRKCQGITAPIEAQVRLKGAGLGAKGS.

This sequence belongs to the RBM5/RBM10 family. Component of the spliceosome A complex (also known as the prespliceosome). Appears to dissociate from the spliceosome upon formation of the spliceosome B complex (also known as the precatalytic spliceosome), in which the heterotrimeric U4/U6.U5 snRNPs are bound. Interacts with U2AF2; this interaction is direct. Also interacts with ACIN1, PRPF8, SFRS3, SNRPB, SNRPN, SNRNP70 and SNRNP200; these interactions may be indirect.

The protein localises to the nucleus. In terms of biological role, component of the spliceosome A complex. Binds to ssRNA containing the consensus sequence 5'-AGGUAA-3'. Regulates alternative splicing of a number of mRNAs. May modulate splice site pairing after recruitment of the U1 and U2 snRNPs to the 5' and 3' splice sites of the intron. May both positively and negatively regulate apoptosis by regulating the alternative splicing of several genes involved in this process, including FAS and CASP2/caspase-2. In the case of FAS, promotes production of a soluble form of FAS that inhibits apoptosis. In the case of CASP2/caspase-2, promotes production of a catalytically active form of CASP2/Caspase-2 that induces apoptosis. The protein is RNA-binding protein 5 (Rbm5) of Mus musculus (Mouse).